Here is a 248-residue protein sequence, read N- to C-terminus: MSQKKQKIQVEQKVPENVAKKTQRDSKLRDAVAKRRTERLAANKTRRAQWEKTAQAYEAEYKAADKSLVDNLRKAKTEGGFYVPAEAKLILVVRIRGINTLNPQVRQTLRLLKLRQLHNAAFVRVNKATIEMIRKVEPYVTYGYPSRAVIKNLIYKRGYAKINGQRIPITNNNVIEQQLGKVGIHSVEDLIHEITTVGPHFKEANRFLWAFKLRGPRGGFIAKRRSFINQGDWGNREDLINDLVKRMI.

The interval 1–45 (MSQKKQKIQVEQKVPENVAKKTQRDSKLRDAVAKRRTERLAANKT) is disordered. The segment covering 8 to 41 (IQVEQKVPENVAKKTQRDSKLRDAVAKRRTERLA) has biased composition (basic and acidic residues).

This sequence belongs to the universal ribosomal protein uL30 family.

Functionally, binds to G-rich structures in 28S rRNA and in mRNAs. Plays a regulatory role in the translation apparatus; inhibits cell-free translation of mRNAs. This Paramecium tetraurelia protein is Large ribosomal subunit protein uL30B (Rpl7-2).